Here is a 135-residue protein sequence, read N- to C-terminus: Lactoylglutathione lyase (135 aa).

The region spanning 2 to 126 (QILHTMLRVG…DGYKIEFIEN (125 aa)) is the VOC domain. His5 is a Ni(2+) binding site. Arg9 contributes to the substrate binding site. Glu56 contacts Ni(2+). Residues Asn60 and His74 each contribute to the substrate site. Residues His74 and Glu122 each coordinate Ni(2+). Glu122 serves as the catalytic Proton donor/acceptor.

Belongs to the glyoxalase I family. As to quaternary structure, homodimer. Ni(2+) serves as cofactor.

The catalysed reaction is (R)-S-lactoylglutathione = methylglyoxal + glutathione. The protein operates within secondary metabolite metabolism; methylglyoxal degradation; (R)-lactate from methylglyoxal: step 1/2. In terms of biological role, catalyzes the conversion of hemimercaptal, formed from methylglyoxal and glutathione, to S-lactoylglutathione. In Haemophilus influenzae (strain ATCC 51907 / DSM 11121 / KW20 / Rd), this protein is Lactoylglutathione lyase (gloA).